We begin with the raw amino-acid sequence, 369 residues long: Translocating chain-associated membrane protein 1-like 1 (369 aa).

Residues 1 to 29 lie on the Cytoplasmic side of the membrane; that stretch reads MGLRKKSTKNPPVLSQEFILQNHADIVSC. The helical transmembrane segment at 30 to 50 threads the bilayer; the sequence is VGMFFLLGLVFEGTAEASIVF. The Lumenal segment spans residues 51-81; the sequence is LTLQHSVAVPAAEEQATGSKSLYYYGVKDLA. Residues 82–102 traverse the membrane as a helical segment; that stretch reads TVFFYMLVAIIIHATIQEYVL. Over 103–121 the chain is Cytoplasmic; the sequence is DKINKRMQFTKAKQNKFNE. The TLC domain occupies 117-326; that stretch reads NKFNESGQFS…TLWLQRWVED (210 aa). A helical membrane pass occupies residues 122-142; that stretch reads SGQFSVFYFFSCIWGTFILIS. Over 143–164 the chain is Lumenal; that stretch reads ENCLSDPTLIWKARPHSMMTFQ. The helical transmembrane segment at 165-185 threads the bilayer; that stretch reads MKFFYISQLAYWFHAFPELYF. The Cytoplasmic segment spans residues 186–196; that stretch reads QKTKKQDIPRQ. Residues 197-215 form a helical membrane-spanning segment; the sequence is LVYIGLHLFHITGAYLLYL. At 216–219 the chain is on the lumenal side; the sequence is NHLG. A helical membrane pass occupies residues 220–242; the sequence is LLLLVLHYFVELLSHMCGLFYFS. The Cytoplasmic portion of the chain corresponds to 243-249; sequence DEKYQKG. A helical membrane pass occupies residues 250–270; that stretch reads ISLWAIVFILGRLVTLIVSVL. At 271-297 the chain is on the lumenal side; that stretch reads TVGFHLAGSQNRNPDALTGNVNVLAAK. The chain crosses the membrane as a helical span at residues 298–318; sequence IAVLSSSCTIQAYVTWNLITL. Residues 319–369 lie on the Cytoplasmic side of the membrane; that stretch reads WLQRWVEDSNIQASCMKKKRSRSSKKRTENGVGVETSNRVDCPPKRKEKSS. Residues 335–369 form a disordered region; that stretch reads KKKRSRSSKKRTENGVGVETSNRVDCPPKRKEKSS. Residues 360–369 show a composition bias toward basic and acidic residues; that stretch reads CPPKRKEKSS.

It belongs to the TRAM family.

It is found in the endoplasmic reticulum membrane. Functionally, stimulatory or required for the translocation of secretory proteins across the ER membrane. This is Translocating chain-associated membrane protein 1-like 1 (TRAM1L1) from Homo sapiens (Human).